The primary structure comprises 281 residues: 2,3,4,5-tetrahydropyridine-2,6-dicarboxylate N-succinyltransferase (281 aa).

The protein belongs to the transferase hexapeptide repeat family.

It localises to the cytoplasm. The catalysed reaction is (S)-2,3,4,5-tetrahydrodipicolinate + succinyl-CoA + H2O = (S)-2-succinylamino-6-oxoheptanedioate + CoA. The protein operates within amino-acid biosynthesis; L-lysine biosynthesis via DAP pathway; LL-2,6-diaminopimelate from (S)-tetrahydrodipicolinate (succinylase route): step 1/3. The protein is 2,3,4,5-tetrahydropyridine-2,6-dicarboxylate N-succinyltransferase of Methylobacterium sp. (strain 4-46).